A 251-amino-acid polypeptide reads, in one-letter code: Hydroxyacylglutathione hydrolase (251 aa).

Zn(2+)-binding residues include His53, His55, Asp57, His58, His110, Asp127, and His165.

It belongs to the metallo-beta-lactamase superfamily. Glyoxalase II family. As to quaternary structure, monomer. The cofactor is Zn(2+).

The catalysed reaction is an S-(2-hydroxyacyl)glutathione + H2O = a 2-hydroxy carboxylate + glutathione + H(+). The protein operates within secondary metabolite metabolism; methylglyoxal degradation; (R)-lactate from methylglyoxal: step 2/2. In terms of biological role, thiolesterase that catalyzes the hydrolysis of S-D-lactoyl-glutathione to form glutathione and D-lactic acid. The sequence is that of Hydroxyacylglutathione hydrolase from Shigella dysenteriae serotype 1 (strain Sd197).